A 218-amino-acid chain; its full sequence is Recombination protein RecR (218 aa).

The C4-type zinc-finger motif lies at 56 to 71 (CRICCNISRDEVCRIC). The region spanning 79–195 (GLICVVEEPK…VVSRLASGMP (117 aa)) is the Toprim domain.

It belongs to the RecR family.

May play a role in DNA repair. It seems to be involved in an RecBC-independent recombinational process of DNA repair. It may act with RecF and RecO. This Corynebacterium efficiens (strain DSM 44549 / YS-314 / AJ 12310 / JCM 11189 / NBRC 100395) protein is Recombination protein RecR.